The primary structure comprises 240 residues: Octanoyltransferase (240 aa).

One can recognise a BPL/LPL catalytic domain in the interval 49–233 (HQAEELVWLL…AFESVFGATR (185 aa)). Residues 87 to 94 (RGGQVTYH), 162 to 164 (AIG), and 175 to 177 (GIA) contribute to the substrate site. Residue Cys193 is the Acyl-thioester intermediate of the active site.

The protein belongs to the LipB family.

It localises to the cytoplasm. The catalysed reaction is octanoyl-[ACP] + L-lysyl-[protein] = N(6)-octanoyl-L-lysyl-[protein] + holo-[ACP] + H(+). Its pathway is protein modification; protein lipoylation via endogenous pathway; protein N(6)-(lipoyl)lysine from octanoyl-[acyl-carrier-protein]: step 1/2. Catalyzes the transfer of endogenously produced octanoic acid from octanoyl-acyl-carrier-protein onto the lipoyl domains of lipoate-dependent enzymes. Lipoyl-ACP can also act as a substrate although octanoyl-ACP is likely to be the physiological substrate. This is Octanoyltransferase from Bradyrhizobium sp. (strain ORS 278).